The sequence spans 326 residues: Ficolin-1 (326 aa).

An N-terminal signal peptide occupies residues 1–29 (MELSGATMARGLAVLLVLFLHIKNLPAQA). The 39-residue stretch at 55 to 93 (GLPGAPGPKGEAGVIGERGERGLPGAPGKAGPVGPKGDR) folds into the Collagen-like domain. The disordered stretch occupies residues 72–111 (RGERGLPGAPGKAGPVGPKGDRGEKGMRGEKGDAGQSQSC). Positions 77–89 (LPGAPGKAGPVGP) are enriched in low complexity. Residues 90–104 (KGDRGEKGMRGEKGD) show a composition bias toward basic and acidic residues. The Fibrinogen C-terminal domain occupies 109–326 (QSCATGPRNC…KVSEMKVRPA (218 aa)). Disulfide bonds link Cys111–Cys139 and Cys118–Cys146. Positions 115–154 (PRNCKDLLDRGYFLSGWHTIYLPDCRPLTVLCDMDTDGGG) are a domain; contributes to trimerization. The interval 155–243 (WTVFQRRMDG…LVLGAFVGGS (89 aa)) is b domain; contributes to trimerization. Positions 262, 264, 266, and 268 each coordinate Ca(2+). Cysteines 270 and 283 form a disulfide. 282 to 284 (DCH) serves as a coordination point for a carbohydrate. Residue Asn305 is glycosylated (N-linked (GlcNAc...) asparagine). The segment at 317-326 (KVSEMKVRPA) is p domain.

The protein belongs to the ficolin lectin family. In terms of assembly, homotrimer. Interacts with elastin/ELN. Interacts (via Fibrinogen C-terminal domain) with FFAR2. Interacts with CRP; may regulate monocyte activation by FCN1. Peripheral blood leukocytes, monocytes and granulocytes. Also detected in spleen, lung, and thymus, may be due to the presence of tissue macrophages or trapped blood in these tissues. Not detected on lymphocytes.

Its subcellular location is the secreted. The protein localises to the cell membrane. Functionally, extracellular lectin functioning as a pattern-recognition receptor in innate immunity. Binds the sugar moieties of pathogen-associated molecular patterns (PAMPs) displayed on microbes and activates the lectin pathway of the complement system. May also activate monocytes through a G protein-coupled receptor, FFAR2, inducing the secretion of interleukin-8/IL-8. Binds preferentially to 9-O-acetylated 2-6-linked sialic acid derivatives and to various glycans containing sialic acid engaged in a 2-3 linkage. This chain is Ficolin-1 (FCN1), found in Homo sapiens (Human).